Consider the following 172-residue polypeptide: Adenine phosphoribosyltransferase (172 aa).

Belongs to the purine/pyrimidine phosphoribosyltransferase family. In terms of assembly, homodimer.

The protein localises to the cytoplasm. It catalyses the reaction AMP + diphosphate = 5-phospho-alpha-D-ribose 1-diphosphate + adenine. It participates in purine metabolism; AMP biosynthesis via salvage pathway; AMP from adenine: step 1/1. Its function is as follows. Catalyzes a salvage reaction resulting in the formation of AMP, that is energically less costly than de novo synthesis. The protein is Adenine phosphoribosyltransferase of Clostridium kluyveri (strain NBRC 12016).